Consider the following 89-residue polypeptide: Cell division topological specificity factor (89 aa).

It belongs to the MinE family.

Functionally, prevents the cell division inhibition by proteins MinC and MinD at internal division sites while permitting inhibition at polar sites. This ensures cell division at the proper site by restricting the formation of a division septum at the midpoint of the long axis of the cell. This Pectobacterium atrosepticum (strain SCRI 1043 / ATCC BAA-672) (Erwinia carotovora subsp. atroseptica) protein is Cell division topological specificity factor.